Consider the following 441-residue polypeptide: Alpha-monoglucosyldiacylglycerol synthase (441 aa).

It belongs to the glycosyltransferase group 1 family. Glycosyltransferase 4 subfamily. It depends on Mg(2+) as a cofactor.

Its subcellular location is the cell membrane. It catalyses the reaction a 1,2-diacyl-sn-glycerol + UDP-alpha-D-glucose = a 1,2-diacyl-3-O-(alpha-D-glucopyranosyl)-sn-glycerol + UDP + H(+). Its activity is regulated as follows. Activated by the negatively charged lipid phosphatidylglycerol (PG). In terms of biological role, glucosyltransferase involved in the biosynthesis of the non-bilayer-prone membrane lipid alpha-monoglucosyldiacylglycerol. This is a major component for maintaining a certain anionic lipid surface charge density, for balancing the bilayer to non-bilayer phase equilibria and for keeping a constant lipid bilayer spontaneous curvature (curvature packing stress). Catalyzes the transfer of a glucosyl residue from UDP-Glc to diacylglycerol (DAG) acceptor to form the corresponding alpha-glucosyl-DAG (1,2-diacyl-3-O-(alpha-D-glucopyranosyl)-sn-glycerol). It can only use UDP-Glc as sugar donor. This is Alpha-monoglucosyldiacylglycerol synthase from Streptococcus pneumoniae (strain ATCC BAA-255 / R6).